A 243-amino-acid polypeptide reads, in one-letter code: Ubiquinone/menaquinone biosynthesis C-methyltransferase UbiE (243 aa).

S-adenosyl-L-methionine-binding positions include threonine 69, aspartate 90, and 116–117 (DA).

The protein belongs to the class I-like SAM-binding methyltransferase superfamily. MenG/UbiE family.

The enzyme catalyses a 2-demethylmenaquinol + S-adenosyl-L-methionine = a menaquinol + S-adenosyl-L-homocysteine + H(+). It carries out the reaction a 2-methoxy-6-(all-trans-polyprenyl)benzene-1,4-diol + S-adenosyl-L-methionine = a 5-methoxy-2-methyl-3-(all-trans-polyprenyl)benzene-1,4-diol + S-adenosyl-L-homocysteine + H(+). Its pathway is quinol/quinone metabolism; menaquinone biosynthesis; menaquinol from 1,4-dihydroxy-2-naphthoate: step 2/2. It functions in the pathway cofactor biosynthesis; ubiquinone biosynthesis. Its function is as follows. Methyltransferase required for the conversion of demethylmenaquinol (DMKH2) to menaquinol (MKH2) and the conversion of 2-polyprenyl-6-methoxy-1,4-benzoquinol (DDMQH2) to 2-polyprenyl-3-methyl-6-methoxy-1,4-benzoquinol (DMQH2). This chain is Ubiquinone/menaquinone biosynthesis C-methyltransferase UbiE, found in Burkholderia cenocepacia (strain HI2424).